A 968-amino-acid chain; its full sequence is C-1-tetrahydrofolate synthase, cytoplasmic (968 aa).

Residues 1-338 are methylenetetrahydrofolate dehydrogenase and cyclohydrolase; it reads MSAQYQRFLK…ERLAKSQWAL (338 aa). Residues 86-90 and 133-135 contribute to the substrate site; these read YIRMK and VQM. NADP(+) contacts are provided by residues 205 to 207 and serine 230; that span reads GRS. 305-309 serves as a coordination point for substrate; that stretch reads PGGVG. The segment at 339–968 is formyltetrahydrofolate synthetase; sequence QTLPLKPQRP…TETGEIEGLF (630 aa). 413–420 lines the ATP pocket; sequence TPLGEGKT.

This sequence in the N-terminal section; belongs to the tetrahydrofolate dehydrogenase/cyclohydrolase family. In the C-terminal section; belongs to the formate--tetrahydrofolate ligase family. As to quaternary structure, homodimer. Present in all tissues.

Its subcellular location is the cytoplasm. The catalysed reaction is (6R)-5,10-methylene-5,6,7,8-tetrahydrofolate + NADP(+) = (6R)-5,10-methenyltetrahydrofolate + NADPH. The enzyme catalyses (6R)-5,10-methenyltetrahydrofolate + H2O = (6R)-10-formyltetrahydrofolate + H(+). It catalyses the reaction (6S)-5,6,7,8-tetrahydrofolate + formate + ATP = (6R)-10-formyltetrahydrofolate + ADP + phosphate. The protein operates within one-carbon metabolism; tetrahydrofolate interconversion. The polypeptide is C-1-tetrahydrofolate synthase, cytoplasmic (pug) (Drosophila melanogaster (Fruit fly)).